A 105-amino-acid polypeptide reads, in one-letter code: Heat shock protein HspQ (105 aa).

The disordered stretch occupies residues 77-105 (MRDEHPEQPSMDELARTIRKQLQAPRLRN).

This sequence belongs to the HspQ family.

Its subcellular location is the cytoplasm. Its function is as follows. Involved in the degradation of certain denaturated proteins, including DnaA, during heat shock stress. This Salmonella arizonae (strain ATCC BAA-731 / CDC346-86 / RSK2980) protein is Heat shock protein HspQ.